A 193-amino-acid polypeptide reads, in one-letter code: MKLLEERILKDGHILGDNILKVDSFLTHQVDFSLMREIGKVFAEKFAATGITKVVTIEASGIAPAVFTAEALNVPMIFAKKAKNITMNEGILTAQVYSFTKQVTSTVSIAGKFLSPEDKVLIIDDFLANGQAAKGLIQIIEQAGATVQAIGIVIEKSFQDGRDLLEKAGYPVLSLARLDRFENGQVVFKEADL.

Xanthine-binding residues include leucine 20 and threonine 27. 128-132 provides a ligand contact to 5-phospho-alpha-D-ribose 1-diphosphate; sequence ANGQA. Lysine 156 lines the xanthine pocket.

This sequence belongs to the purine/pyrimidine phosphoribosyltransferase family. Xpt subfamily. Homodimer.

It is found in the cytoplasm. It carries out the reaction XMP + diphosphate = xanthine + 5-phospho-alpha-D-ribose 1-diphosphate. The protein operates within purine metabolism; XMP biosynthesis via salvage pathway; XMP from xanthine: step 1/1. In terms of biological role, converts the preformed base xanthine, a product of nucleic acid breakdown, to xanthosine 5'-monophosphate (XMP), so it can be reused for RNA or DNA synthesis. The sequence is that of Xanthine phosphoribosyltransferase from Streptococcus pneumoniae serotype 19F (strain G54).